Reading from the N-terminus, the 169-residue chain is Peptide deformylase (169 aa).

Fe cation-binding residues include C91 and H133. E134 is a catalytic residue. Position 137 (H137) interacts with Fe cation.

The protein belongs to the polypeptide deformylase family. It depends on Fe(2+) as a cofactor.

It catalyses the reaction N-terminal N-formyl-L-methionyl-[peptide] + H2O = N-terminal L-methionyl-[peptide] + formate. Its function is as follows. Removes the formyl group from the N-terminal Met of newly synthesized proteins. Requires at least a dipeptide for an efficient rate of reaction. N-terminal L-methionine is a prerequisite for activity but the enzyme has broad specificity at other positions. In Enterobacter sp. (strain 638), this protein is Peptide deformylase.